The primary structure comprises 287 residues: ATP synthase subunit a (287 aa).

Helical transmembrane passes span 38-58 (DSMVLALLLGGLTLLILWTAA), 96-116 (FIAPLGLVVFVWVFLMNAMDM), 139-161 (VVPTADLSTTMGLALAVLGLRFW), 187-207 (PLFALILGLVNLLMQVIEYVA), 225-245 (LVFMLIALMGGAAALSLSGVL), and 259-279 (LFHILVITLQAFIFMMLALIY).

It belongs to the ATPase A chain family. As to quaternary structure, F-type ATPases have 2 components, CF(1) - the catalytic core - and CF(0) - the membrane proton channel. CF(1) has five subunits: alpha(3), beta(3), gamma(1), delta(1), epsilon(1). CF(0) has three main subunits: a(1), b(2) and c(9-12). The alpha and beta chains form an alternating ring which encloses part of the gamma chain. CF(1) is attached to CF(0) by a central stalk formed by the gamma and epsilon chains, while a peripheral stalk is formed by the delta and b chains.

The protein localises to the cell inner membrane. Its function is as follows. Key component of the proton channel; it plays a direct role in the translocation of protons across the membrane. The polypeptide is ATP synthase subunit a (Verminephrobacter eiseniae (strain EF01-2)).